The sequence spans 283 residues: Arsenite methyltransferase (283 aa).

The protein belongs to the methyltransferase superfamily. Arsenite methyltransferase family.

The enzyme catalyses arsenic triglutathione + [thioredoxin]-dithiol + S-adenosyl-L-methionine + 2 H2O = methylarsonous acid + [thioredoxin]-disulfide + 3 glutathione + S-adenosyl-L-homocysteine + H(+). The catalysed reaction is arsenic triglutathione + 2 [thioredoxin]-dithiol + 2 S-adenosyl-L-methionine + H2O = dimethylarsinous acid + 2 [thioredoxin]-disulfide + 3 glutathione + 2 S-adenosyl-L-homocysteine + 2 H(+). It carries out the reaction arsenic triglutathione + 3 [thioredoxin]-dithiol + 3 S-adenosyl-L-methionine = trimethylarsine + 3 [thioredoxin]-disulfide + 3 glutathione + 3 S-adenosyl-L-homocysteine + 3 H(+). Its function is as follows. Catalyzes the transfer of a methyl group from AdoMet to arsenite, producing methylated arsenicals. Involved in the conversion of As(III) to a number of di- and trimethylated species, with trimethylarsine as the end product. Reduces the arsenic toxicity in the cell and may contribute to the global arsenic cycling. This is Arsenite methyltransferase from Rhodopseudomonas palustris (strain ATCC BAA-98 / CGA009).